The primary structure comprises 97 residues: Acylphosphatase (97 aa).

The 87-residue stretch at Thr11–His97 folds into the Acylphosphatase-like domain. Residues Arg26 and Asn44 contribute to the active site. Residues Arg76–His97 form a disordered region. The span at Gly82–His97 shows a compositional bias: basic and acidic residues.

It belongs to the acylphosphatase family.

It carries out the reaction an acyl phosphate + H2O = a carboxylate + phosphate + H(+). In Paraburkholderia xenovorans (strain LB400), this protein is Acylphosphatase (acyP).